The primary structure comprises 1751 residues: Non-reducing polyketide synthase afvB (1751 aa).

The segment at 19–249 (FRRLRLHSKC…PLPVYGGPCH (231 aa)) is N-terminal acylcarrier protein transacylase domain (SAT). Residues 381–811 (HEKIAVIGMS…GGNTSLLLEE (431 aa)) enclose the Ketosynthase family 3 (KS3) domain. Catalysis depends on for beta-ketoacyl synthase activity residues Cys-554, His-689, and His-730. The malonyl-CoA:ACP transacylase (MAT) domain stretch occupies residues 910–1228 (FVFSGQGSFS…SMSALHSAGV (319 aa)). Residues 1291–1607 (TALVHHILEE…PRILMSRFFD (317 aa)) are product template (PT) domain. The segment at 1295 to 1429 (HHILEESFGK…GVVTCGDSHS (135 aa)) is N-terminal hotdog fold. The 309-residue stretch at 1295–1603 (HHILEESFGK…LRPLPRILMS (309 aa)) folds into the PKS/mFAS DH domain. His-1327 serves as the catalytic Proton acceptor; for dehydratase activity. Residues 1456–1603 (LASRVSKDLV…LRPLPRILMS (148 aa)) form a C-terminal hotdog fold region. Catalysis depends on Asp-1514, which acts as the Proton donor; for dehydratase activity. Residues 1610 to 1670 (DSQYGQMAQQ…KAPISGSWPN (61 aa)) are disordered. Over residues 1612–1657 (QYGQMAQQEPSTALPSTPQHTSSAKTTESTPSQQDESDNTSLATPE) the composition is skewed to polar residues. The Carrier domain maps to 1670–1747 (NANSQLVRDA…DLKAYLEGNQ (78 aa)). Ser-1707 carries the O-(pantetheine 4'-phosphoryl)serine modification.

It depends on pantetheine 4'-phosphate as a cofactor. Expressed mainly in sclerotia, with expression levels 20-fold and 10-fold greater than the expression levels of this gene found in mycelium and conidia, respectively.

The protein operates within secondary metabolite biosynthesis. In terms of biological role, non-reducing polyketide synthase (NRPKS); part of the gene cluster that mediates the biosynthesis of aflavarin, a bicoumarin that exhibits anti-insectan activity against the fungivorous beetle C.hemipterus. Catalyzes the formation of the aromatic polyketide from acetyl coenzyme A and seven malonyl coenzyme A molecules. This Aspergillus flavus (strain ATCC 200026 / FGSC A1120 / IAM 13836 / NRRL 3357 / JCM 12722 / SRRC 167) protein is Non-reducing polyketide synthase afvB.